The primary structure comprises 335 residues: Nucleoid-associated protein YejK (335 aa).

It belongs to the YejK family.

The protein resides in the cytoplasm. Its subcellular location is the nucleoid. The protein is Nucleoid-associated protein YejK of Shigella flexneri.